A 260-amino-acid polypeptide reads, in one-letter code: MIIVLSPAKSLDYETPAHVEAYTKPAFVDDASELIDGLRKLSPQDIAALMDISDPLARLNFQRYADWSSTFTPANAKQAVLAFNGDVYEGFDAKSLSSTDLDYAQQHVRVLSGLYGLLRPLDLLQPYRLEMGTRFANARGKDLYAFWGDRITRALNEQLETRSGAARVLVNCASTEYFKSVKPKLLAAPVITPVFEDWKGGRYKIISFHAKRARGLMARFVVENRITDPNALKAFSTEGYVFDAAASNDSTYVYRRRVGE.

It belongs to the UPF0246 family.

This chain is UPF0246 protein Bcenmc03_2247, found in Burkholderia orbicola (strain MC0-3).